The following is a 455-amino-acid chain: Probable glycine dehydrogenase (decarboxylating) subunit 1 (455 aa).

The protein belongs to the GcvP family. N-terminal subunit subfamily. As to quaternary structure, the glycine cleavage system is composed of four proteins: P, T, L and H. In this organism, the P 'protein' is a heterodimer of two subunits.

The catalysed reaction is N(6)-[(R)-lipoyl]-L-lysyl-[glycine-cleavage complex H protein] + glycine + H(+) = N(6)-[(R)-S(8)-aminomethyldihydrolipoyl]-L-lysyl-[glycine-cleavage complex H protein] + CO2. In terms of biological role, the glycine cleavage system catalyzes the degradation of glycine. The P protein binds the alpha-amino group of glycine through its pyridoxal phosphate cofactor; CO(2) is released and the remaining methylamine moiety is then transferred to the lipoamide cofactor of the H protein. This is Probable glycine dehydrogenase (decarboxylating) subunit 1 from Francisella tularensis subsp. holarctica (strain FTNF002-00 / FTA).